The sequence spans 120 residues: Putative non-specific lipid-transfer protein 14 (120 aa).

Residues 1–22 form the signal peptide; it reads MTRSFSPVVSLFLLLLQTICSA. 4 disulfides stabilise this stretch: C30–C80, C40–C57, C58–C102, and C78–C116.

Belongs to the plant LTP family.

In terms of biological role, plant non-specific lipid-transfer proteins transfer phospholipids as well as galactolipids across membranes. May play a role in wax or cutin deposition in the cell walls of expanding epidermal cells and certain secretory tissues. This is Putative non-specific lipid-transfer protein 14 (LTP14) from Arabidopsis thaliana (Mouse-ear cress).